The chain runs to 316 residues: BRCA2 and CDKN1A-interacting protein (316 aa).

Residues 1 to 57 (MASKAKKRAVGNGIQRPLGAPGQREEEEEEEDEVEDEEEDEDDSDEEEDEVDEIVDE) are disordered. Over residues 25 to 57 (EEEEEEEDEVEDEEEDEDDSDEEEDEVDEIVDE) the composition is skewed to acidic residues. A phosphoserine mark is found at serine 44 and serine 114. The interval 61 to 169 (IEFEAYSISD…EQSMVEQLDK (109 aa)) is interaction with BRCA2. The interaction with CDKN1A stretch occupies residues 163-261 (MVEQLDKLLN…NAEEEFFYEK (99 aa)). Serine 283 carries the phosphoserine modification.

Belongs to the BCP1 family. As to quaternary structure, interacts with BRCA2, CDKN1A and MTDH/LYRIC. Interacts with DCTN1/p150-glued and ACTR1A/ARP1. Interacts with alpha-, beta- and gamma-tubulins. Interacts with TENT5C; the interaction has no effect on TENT5C poly(A) polymerase function. As to expression, expressed in the testes (at protein level).

The protein resides in the nucleus. The protein localises to the cytoplasm. It localises to the cytoskeleton. It is found in the microtubule organizing center. Its subcellular location is the centrosome. The protein resides in the centriole. The protein localises to the spindle pole. Its function is as follows. During interphase, required for microtubule organizing and anchoring activities. During mitosis, required for the organization and stabilization of the spindle pole. May promote cell cycle arrest by enhancing the inhibition of CDK2 activity by CDKN1A. May be required for repair of DNA damage by homologous recombination in conjunction with BRCA2. May not be involved in non-homologous end joining (NHEJ). This is BRCA2 and CDKN1A-interacting protein (Bccip) from Mus musculus (Mouse).